The following is a 306-amino-acid chain: Ornithine carbamoyltransferase (306 aa).

Carbamoyl phosphate is bound by residues 51–54 (STRT), Gln78, Arg102, and 129–132 (HPCQ). L-ornithine contacts are provided by residues Asn160, Asp223, and 227–228 (SM). Residues 263 to 264 (CL) and Arg291 each bind carbamoyl phosphate.

The protein belongs to the aspartate/ornithine carbamoyltransferase superfamily. OTCase family.

The protein localises to the cytoplasm. It catalyses the reaction carbamoyl phosphate + L-ornithine = L-citrulline + phosphate + H(+). It participates in amino-acid biosynthesis; L-arginine biosynthesis; L-arginine from L-ornithine and carbamoyl phosphate: step 1/3. Its function is as follows. Reversibly catalyzes the transfer of the carbamoyl group from carbamoyl phosphate (CP) to the N(epsilon) atom of ornithine (ORN) to produce L-citrulline. The polypeptide is Ornithine carbamoyltransferase (Nostoc sp. (strain PCC 7120 / SAG 25.82 / UTEX 2576)).